The sequence spans 143 residues: uncharacterized protein (143 aa).

The 55-residue stretch at 24 to 78 folds into the HTH cro/C1-type domain; the sequence is IRQRRRWQNMSQAALGEAIGVTFQQVQKYEKGSNRVGAGRLQQISDALEVHPSYF. Positions 35–54 form a DNA-binding region, H-T-H motif; that stretch reads QAALGEAIGVTFQQVQKYEK.

This is an uncharacterized protein from Sinorhizobium fredii (strain NBRC 101917 / NGR234).